The chain runs to 50 residues: Photosystem II reaction center protein M (50 aa).

The chain crosses the membrane as a helical span at residues 6–26 (FGFVASLLFVGVPTIFLIGLF).

The protein belongs to the PsbM family. In terms of assembly, PSII is composed of 1 copy each of membrane proteins PsbA, PsbB, PsbC, PsbD, PsbE, PsbF, PsbH, PsbI, PsbJ, PsbK, PsbL, PsbM, PsbT, PsbX, PsbY, Psb30/Ycf12, peripheral proteins PsbO, CyanoQ (PsbQ), PsbU, PsbV and a large number of cofactors. It forms dimeric complexes.

It is found in the cellular thylakoid membrane. Its function is as follows. One of the components of the core complex of photosystem II (PSII). PSII is a light-driven water:plastoquinone oxidoreductase that uses light energy to abstract electrons from H(2)O, generating O(2) and a proton gradient subsequently used for ATP formation. It consists of a core antenna complex that captures photons, and an electron transfer chain that converts photonic excitation into a charge separation. This subunit is found at the monomer-monomer interface. The polypeptide is Photosystem II reaction center protein M (Prochlorococcus marinus (strain MIT 9215)).